The following is a 510-amino-acid chain: MIWHVQNENFILDSTRIFMKAFHLLLFQGSFIFPECILIFGLILLLMIDLTSDQKDRPWFYFISSTSLVISITALLFRWREEPIISFSGNFQTNNFNEIFQFLILLCSTLCIPLSVEYIECTEMAITEFLLFVLTATLGGMFLCGANDLITIFVAPECFSLCSYLLSGYTKRDLRSNEATMKYLLMGGASSSILVHGFSWLYGSSGGEIELQEIVNGLINTQMYNSPGISIALISITVGLGFKLSPAPFHQWTPDVYEGSPTPVVAFLSVTSKVAASASATRILDIPFYFSSNEWHLLLEILAILSMILGNLLAITQTSMKRMLAYSSIGQIGYVIIGIIVGDSNDGYASMITYMLFYISMNLGTFACIVLFGLRTGTDNIRDYAGLYTKDPFLALSLALCLLSLGGLPPLAGFFGKLYLFWCGWQAGLYFLVSIGLLTSVLSIYYYLKIVKLLMTGRNQEITPYVRNYRRSPLRSNNSIELSMTVCVIASTIPGISMNPILAIAQDTLF.

Helical transmembrane passes span 31 to 51 (FIFPECILIFGLILLLMIDLT), 59 to 79 (WFYFISSTSLVISITALLFRW), 99 to 119 (IFQFLILLCSTLCIPLSVEYI), 124 to 144 (MAITEFLLFVLTATLGGMFLC), 149 to 169 (LITIFVAPECFSLCSYLLSGY), 183 to 203 (YLLMGGASSSILVHGFSWLYG), 229 to 249 (ISIALISITVGLGFKLSPAPF), 295 to 315 (WHLLLEILAILSMILGNLLAI), 323 to 343 (MLAYSSIGQIGYVIIGIIVGD), 354 to 374 (YMLFYISMNLGTFACIVLFGL), 395 to 415 (ALSLALCLLSLGGLPPLAGFF), and 418 to 438 (LYLFWCGWQAGLYFLVSIGLL).

The protein belongs to the complex I subunit 2 family. As to quaternary structure, NDH is composed of at least 16 different subunits, 5 of which are encoded in the nucleus.

The protein resides in the plastid. The protein localises to the chloroplast thylakoid membrane. The catalysed reaction is a plastoquinone + NADH + (n+1) H(+)(in) = a plastoquinol + NAD(+) + n H(+)(out). It catalyses the reaction a plastoquinone + NADPH + (n+1) H(+)(in) = a plastoquinol + NADP(+) + n H(+)(out). Functionally, NDH shuttles electrons from NAD(P)H:plastoquinone, via FMN and iron-sulfur (Fe-S) centers, to quinones in the photosynthetic chain and possibly in a chloroplast respiratory chain. The immediate electron acceptor for the enzyme in this species is believed to be plastoquinone. Couples the redox reaction to proton translocation, and thus conserves the redox energy in a proton gradient. This Oryza nivara (Indian wild rice) protein is NAD(P)H-quinone oxidoreductase subunit 2 A, chloroplastic.